Consider the following 407-residue polypeptide: Serine/threonine transporter SstT (407 aa).

Helical transmembrane passes span 10–30 (AKGNLIIQICAGIALGILIGI), 42–62 (LGILFTSALKAIAPMLVFILI), 81–101 (IIILYIVGTFLASACAILANF), 141–161 (ALSSGNYLGILTWAIAGGAAL), 179–199 (VLKIVKFVVKLAPFGIFGLVA), 218–238 (ILLVATMLFVTFVINALIVFF), 245–267 (FPLIFICLRHSAFFAFFTRSSAA), 288–308 (ISIPLGATINMAGAAVTIAIL), and 316–336 (VGIEISLLQAFLLSIIATFAA).

Belongs to the dicarboxylate/amino acid:cation symporter (DAACS) (TC 2.A.23) family.

The protein resides in the cell inner membrane. It carries out the reaction L-serine(in) + Na(+)(in) = L-serine(out) + Na(+)(out). The enzyme catalyses L-threonine(in) + Na(+)(in) = L-threonine(out) + Na(+)(out). In terms of biological role, involved in the import of serine and threonine into the cell, with the concomitant import of sodium (symport system). The sequence is that of Serine/threonine transporter SstT from Campylobacter jejuni subsp. doylei (strain ATCC BAA-1458 / RM4099 / 269.97).